Consider the following 176-residue polypeptide: Pituitary adenylate cyclase-activating polypeptide (176 aa).

A signal peptide spans 1 to 24 (MTMCSGARLALLVYGIIMHSSVYC). Residues 25 to 80 (SPAAAGLRFPGIRPEDEAYDEDGNPLQDFYDSDPPGVGGPASTLRDAYALYYPAEE) constitute a propeptide that is removed on maturation. The interval 150-158 (VKKYLAAVL) is important for receptor binding. A Leucine amide modification is found at Leu-158. Lys-169 carries the lysine amide modification. A propeptide spanning residues 173 to 176 (IAYL) is cleaved from the precursor.

It belongs to the glucagon family.

The protein localises to the secreted. PACAP is a neuropeptide involved in diverse array of physiological processes through activating the PACAP subfamily of class B1 G protein-coupled receptors: VIP receptor 1 (VIPR1), VIP receptor 2 (VIPR2), and PACAP type I receptor (ADCYAP1R1). Exerts neuroprotective and general cytoprotective effects due to anti-apoptotic, anti-inflammatory, and antioxidant actions. Promotes neuron projection development through the RAPGEF2/Rap1/B-Raf/ERK pathway. In chromaffin cells, induces long-lasting increase of intracellular calcium concentrations and neuroendocrine secretion. Involved in the control of glucose homeostasis, induces insulin secretion by pancreatic beta cells. PACAP exists in two bioactive forms from proteolysis of the same precursor protein, PACAP27 and PACAP38, which differ by eleven amino acid residues in the C-terminus. This Sus scrofa (Pig) protein is Pituitary adenylate cyclase-activating polypeptide (ADCYAP1).